We begin with the raw amino-acid sequence, 358 residues long: Phospho-N-acetylmuramoyl-pentapeptide-transferase (358 aa).

10 helical membrane passes run 24 to 44 (FRSI…GPWV), 73 to 93 (TMGG…WADL), 95 to 115 (NVFI…GFVD), 134 to 154 (MFWQ…LPGF), 169 to 189 (ELGI…SNAV), 197 to 217 (GLAI…CYIA), 233 to 253 (GAGE…GFLW), 261 to 281 (VFMG…LAVL), 286 to 306 (ILLV…IFQV), and 335 to 355 (KIIV…ISTL).

The protein belongs to the glycosyltransferase 4 family. MraY subfamily. The cofactor is Mg(2+).

It localises to the cell inner membrane. The catalysed reaction is UDP-N-acetyl-alpha-D-muramoyl-L-alanyl-gamma-D-glutamyl-meso-2,6-diaminopimeloyl-D-alanyl-D-alanine + di-trans,octa-cis-undecaprenyl phosphate = di-trans,octa-cis-undecaprenyl diphospho-N-acetyl-alpha-D-muramoyl-L-alanyl-D-glutamyl-meso-2,6-diaminopimeloyl-D-alanyl-D-alanine + UMP. The protein operates within cell wall biogenesis; peptidoglycan biosynthesis. Functionally, catalyzes the initial step of the lipid cycle reactions in the biosynthesis of the cell wall peptidoglycan: transfers peptidoglycan precursor phospho-MurNAc-pentapeptide from UDP-MurNAc-pentapeptide onto the lipid carrier undecaprenyl phosphate, yielding undecaprenyl-pyrophosphoryl-MurNAc-pentapeptide, known as lipid I. This Geobacter sp. (strain M21) protein is Phospho-N-acetylmuramoyl-pentapeptide-transferase.